Consider the following 165-residue polypeptide: MPSFDVVSKIDLAELDNAVNQTKKELSTRYDFQGTHADVVLAPDNTAITVKANSEDRVQAAKEVLLTKLAKRNISLFALEYGDIEKTGLHNVKQVIKLQQGIPVEKSKELVKLLKDSKMKVQGSIQADQLRVTGKNRDDLQAAIALFRKEQDRLKLDMQFINFRD.

Belongs to the YajQ family.

Its function is as follows. Nucleotide-binding protein. This Myxococcus xanthus (strain DK1622) protein is Nucleotide-binding protein MXAN_1478.